The chain runs to 473 residues: Phosphatidylserine synthase 1 (473 aa).

Residue alanine 2 is modified to N-acetylalanine. Residues 2 to 35 (ASCVGSRTLSKDDVNYRMHFRMINEQQVEDITID) are Cytoplasmic-facing. A helical membrane pass occupies residues 36–56 (FFYRPHTITLLSFTIISLMYF). Residues 57 to 72 (AFTRDDSVPEDNIWRG) lie on the Lumenal side of the membrane. A helical transmembrane segment spans residues 73 to 93 (ILSVIFFFLIISVLAFPNGPF). The Cytoplasmic segment spans residues 94-102 (TRPHPALWR). A helical transmembrane segment spans residues 103–123 (MVFGLSVLYFLFLVFLLFLNF). The Lumenal segment spans residues 124–186 (EQVKSLMYWL…AMKALLIRSY (63 aa)). A helical membrane pass occupies residues 187–207 (GLCWTISITWELTELFFMHLL). Topologically, residues 208–216 (PNFAECWWD) are cytoplasmic. Residues 217–237 (QVILDILLCNGGGIWLGMVVC) traverse the membrane as a helical segment. Residues 238 to 286 (RFLEMRTYHWASFKDIHTTTGKIKRAVLQFTPASWTYVRWFDPKSSFQR) lie on the Lumenal side of the membrane. The chain crosses the membrane as a helical span at residues 287–307 (VAGIYLFMIIWQLTELNTFFL). Topologically, residues 308-319 (KHIFVFQASHPL) are cytoplasmic. The helical transmembrane segment at 320-342 (SWGRILFIGCITAPTVRQYYAYL) threads the bilayer. Topologically, residues 343-355 (TDTQCKRVGTQCW) are lumenal. Residues 356-376 (VFGVIGFLEAIVCIKFGQDLF) traverse the membrane as a helical segment. Residues 377 to 383 (SKTQILY) lie on the Cytoplasmic side of the membrane. A helical membrane pass occupies residues 384–404 (VMLWLLCVAFTTFLCLYGMVW). Over 405–473 (YAEHYGHREK…SKVTNGVGKK (69 aa)) the chain is Lumenal. A phosphoserine mark is found at serine 417, serine 425, serine 442, and serine 454. The interval 428–473 (ISWHHGKGSKGSEDSPPKHSSNHESHSSRRRNRHSKSKVTNGVGKK) is disordered. Basic and acidic residues predominate over residues 437–454 (KGSEDSPPKHSSNHESHS). Residues 455-464 (SRRRNRHSKS) show a composition bias toward basic residues.

This sequence belongs to the phosphatidyl serine synthase family. In terms of tissue distribution, expressed in kidney, testis, lung, skeletal muscle, liver brain, heart and spleen with highest expression in testis, liver, heart and brain.

It is found in the endoplasmic reticulum membrane. It carries out the reaction a 1,2-diacyl-sn-glycero-3-phosphoethanolamine + L-serine = a 1,2-diacyl-sn-glycero-3-phospho-L-serine + ethanolamine. The enzyme catalyses a 1,2-diacyl-sn-glycero-3-phosphocholine + L-serine = a 1,2-diacyl-sn-glycero-3-phospho-L-serine + choline. The protein operates within phospholipid metabolism; phosphatidylserine biosynthesis. With respect to regulation, potently inhibited by choline in the mitochondria-associated membrane (MAM). Very little inhibition by choline in the endoplasmic reticulum (ER) per se. Its function is as follows. Catalyzes a base-exchange reaction in which the polar head group of phosphatidylethanolamine (PE) or phosphatidylcholine (PC) is replaced by L-serine. Catalyzes mainly the conversion of phosphatidylcholine. Also converts, in vitro and to a lesser extent, phosphatidylethanolamine. This Mus musculus (Mouse) protein is Phosphatidylserine synthase 1 (Ptdss1).